Consider the following 179-residue polypeptide: MSRIGKQPVPVPAGVDVTISGQNVSVKGPKGTLTLDVAEPIEVSRNDDGAIVVTRPNDERRNRSLHGLSRTLIANLVTGVTEGYTTKMEIFGVGYRVVAKGSNLEFALGYSHPVLINAPEGVTFAVETPTKFSISGIDKQAVGQIAANIRRLRKSDPYKGKGIRYEGEQIRRKVGKTGK.

Belongs to the universal ribosomal protein uL6 family. Part of the 50S ribosomal subunit.

Functionally, this protein binds to the 23S rRNA, and is important in its secondary structure. It is located near the subunit interface in the base of the L7/L12 stalk, and near the tRNA binding site of the peptidyltransferase center. The chain is Large ribosomal subunit protein uL6 from Mycolicibacterium gilvum (strain PYR-GCK) (Mycobacterium gilvum (strain PYR-GCK)).